We begin with the raw amino-acid sequence, 312 residues long: E3 ubiquitin-protein ligase RNF126-B (312 aa).

Residues cysteine 13, cysteine 16, cysteine 29, and cysteine 32 each contribute to the Zn(2+) site. The C4-type zinc-finger motif lies at 13–32 (CHSCTAEITPRLPEYTCPRC). Disordered stretches follow at residues 41–63 (PETS…NRPS) and 96–139 (GTSG…RNEG). Residues 44 to 55 (SRNSESNSSNNS) are compositionally biased toward low complexity. Residues 102 to 115 (EETRDGESRREHQS) show a composition bias toward basic and acidic residues. Over residues 124 to 134 (PRARMSTRRGA) the composition is skewed to basic residues. Residues 228 to 269 (CPVCKEDYTVGESVRQLPCNHLFHNDCIIPWLEQHDTCPVCR) form an RING-type zinc finger. The disordered stretch occupies residues 275–312 (QNTATNPPGLTDMTFSSSSTSSSSSTSPTDENNTANNS). A compositionally biased stretch (low complexity) spans 290–301 (SSSSTSSSSSTS). Residues 302–312 (PTDENNTANNS) show a composition bias toward polar residues.

The protein resides in the cytoplasm. The protein localises to the nucleus. The enzyme catalyses S-ubiquitinyl-[E2 ubiquitin-conjugating enzyme]-L-cysteine + [acceptor protein]-L-lysine = [E2 ubiquitin-conjugating enzyme]-L-cysteine + N(6)-ubiquitinyl-[acceptor protein]-L-lysine.. Its pathway is protein modification; protein ubiquitination. E3 ubiquitin-protein ligase that mediates ubiquitination oF target proteins. Depending on the associated E2 ligase, mediates 'Lys-27'-, 'Lys-29'-, 'Lys-48'- and/or 'Lys-63'-linked polyubiquitination of substrates. Part of a BAG6-dependent quality control process ensuring that proteins of the secretory pathway that are mislocalized to the cytosol are degraded by the proteasome. Probably acts by providing the ubiquitin ligase activity associated with the BAG6 complex and be responsible for ubiquitination of the hydrophobic mislocalized proteins and their targeting to the proteasome. The sequence is that of E3 ubiquitin-protein ligase RNF126-B from Xenopus laevis (African clawed frog).